Reading from the N-terminus, the 214-residue chain is MDEIKIPKATARRLPLYYRYLIFLNDEGKEKVSSTELAEAVQVDSASIRRDFSYFGALGKRGYGYDVKNLLNFFKKILNQDTLTNVALVGVGNMGHALLNYNFKRTNNIRISAAFDINPEITGTIMSGVPVYDMSEMKKQLREQQITIAILCVPQTAAQKTANEMFDAGIKGIMNFTPLRLSAPSSVRVQNVDLATELQTLIYFLDSDKDKNKK.

Residues 16 to 55 constitute a DNA-binding region (H-T-H motif); it reads LYYRYLIFLNDEGKEKVSSTELAEAVQVDSASIRRDFSYF. Residue 90–95 participates in NAD(+) binding; sequence GVGNMG.

It belongs to the transcriptional regulatory Rex family. Homodimer.

It localises to the cytoplasm. Functionally, modulates transcription in response to changes in cellular NADH/NAD(+) redox state. This Lactobacillus gasseri (strain ATCC 33323 / DSM 20243 / BCRC 14619 / CIP 102991 / JCM 1131 / KCTC 3163 / NCIMB 11718 / NCTC 13722 / AM63) protein is Redox-sensing transcriptional repressor Rex.